A 241-amino-acid chain; its full sequence is tRNA pseudouridine synthase A (241 aa).

Aspartate 53 acts as the Nucleophile in catalysis. Position 110 (tyrosine 110) interacts with substrate.

Belongs to the tRNA pseudouridine synthase TruA family. As to quaternary structure, homodimer.

It carries out the reaction uridine(38/39/40) in tRNA = pseudouridine(38/39/40) in tRNA. Formation of pseudouridine at positions 38, 39 and 40 in the anticodon stem and loop of transfer RNAs. This Malacoplasma penetrans (strain HF-2) (Mycoplasma penetrans) protein is tRNA pseudouridine synthase A.